Consider the following 462-residue polypeptide: Aquaporin-1 (462 aa).

Polar residues predominate over residues 1 to 11 (MTMRSPLTNDH). Positions 1–24 (MTMRSPLTNDHPQPLRASPLSEHD) are disordered. Topologically, residues 1-146 (MTMRSPLTND…KWMNSDWKNH (146 aa)) are cytoplasmic. The chain crosses the membrane as a helical span at residues 147 to 167 (IVAVIGELIGTSLFLFFGYAG). The Extracellular segment spans residues 168–182 (IEVAKLQGREPPDLE). A helical transmembrane segment spans residues 183-203 (VLFYISATFGASLMVTAWIFF). Residues 204-229 (RISGGLFNPAVTLALAILKAVSPIRA) lie on the Cytoplasmic side of the membrane. The short motif at 211-213 (NPA) is the NPA 1 element. A helical membrane pass occupies residues 230 to 250 (FLLVITQLGASCLAAILVQEI). The Extracellular segment spans residues 251–269 (FPKQLDVATTLGSGTSMGQ). Residues 270-290 (GFVIEAITTAALIFTIIMLAV) traverse the membrane as a helical segment. The Cytoplasmic segment spans residues 291-296 (EKHKAT). The chain crosses the membrane as a helical span at residues 297–317 (FVAPIGIGLALFVAHMVAVPF). Residues 318-341 (TGASLNPARSFGPSAIVWNFPREH) are Extracellular-facing. The NPA 2 motif lies at 323–325 (NPA). A helical membrane pass occupies residues 342 to 362 (WIYWVGPILGAGLAVLFFRLI). Over 363–462 (KLMEYEMANP…WRRQQYRNVV (100 aa)) the chain is Cytoplasmic. Residues 407–433 (GKSWYRDDSSSGSMRRKESVNSFTGGR) are disordered. The span at 410 to 425 (WYRDDSSSGSMRRKES) shows a compositional bias: basic and acidic residues.

Belongs to the MIP/aquaporin (TC 1.A.8) family.

The protein localises to the membrane. It carries out the reaction H2O(in) = H2O(out). In terms of biological role, water channel required to facilitate the transport of water across membranes. Involved in conidiation. The polypeptide is Aquaporin-1 (Botryotinia fuckeliana (strain B05.10) (Noble rot fungus)).